The primary structure comprises 347 residues: Phenylalanine--tRNA ligase alpha subunit (347 aa).

A Mg(2+)-binding site is contributed by E262.

This sequence belongs to the class-II aminoacyl-tRNA synthetase family. Phe-tRNA synthetase alpha subunit type 1 subfamily. As to quaternary structure, tetramer of two alpha and two beta subunits. Requires Mg(2+) as cofactor.

The protein resides in the cytoplasm. It carries out the reaction tRNA(Phe) + L-phenylalanine + ATP = L-phenylalanyl-tRNA(Phe) + AMP + diphosphate + H(+). This is Phenylalanine--tRNA ligase alpha subunit from Roseiflexus castenholzii (strain DSM 13941 / HLO8).